The following is a 278-amino-acid chain: Endoplasmic reticulum junction formation protein lunapark (278 aa).

Over 1–45 (MFSALGKWVRGSRNDKDFVTKYTADLSQITSQIHQLDVALKKSQS) the chain is Cytoplasmic. The helical transmembrane segment at 46 to 66 (ILSQWQSNLTFYGIALTVLAL) threads the bilayer. At 67–77 (SYTYWEYHGYR) the chain is on the lumenal side. Residues 78–98 (PYLVVTALLCIGSLILFKWAL) form a helical membrane-spanning segment. Over 99-278 (TKLYAFYNNN…PSQSEKEKTK (180 aa)) the chain is Cytoplasmic. Residues 107 to 183 (NNRLRKLAKL…ELEKFKKESH (77 aa)) are a coiled coil. The segment at 223–247 (CPQCHWKSNCYRLASKPIIFICPHC) adopts a C4-type; plays a role in ER morphology zinc-finger fold. Residues 258–278 (EDAIEAKQPAQPSQSEKEKTK) form a disordered region.

It belongs to the lunapark family. As to quaternary structure, interacts with RTN1; this interaction is negatively regulated by SEY1. Interacts with SEY1 and YOP1.

It is found in the endoplasmic reticulum membrane. Its function is as follows. Plays a role in tubular endoplasmic reticulum network formation and maintenance. Works in conjunction with the ER shaping proteins (reticulons RTN1 and RTN2, YOP1), and in antagonism to SEY1 to maintain the network in a dynamic equilibrium. May counterbalance SEY1-directed polygon formation by promoting polygon loss through ring closure. This chain is Endoplasmic reticulum junction formation protein lunapark (LNP1), found in Saccharomyces cerevisiae (strain ATCC 204508 / S288c) (Baker's yeast).